Consider the following 419-residue polypeptide: Homeobox-containing protein 1 (419 aa).

The 32-residue stretch at Asp-18–Thr-49 folds into the HNF-p1 domain. A disordered region spans residues Glu-56 to Ser-152. Residue Lys-60 forms a Glycyl lysine isopeptide (Lys-Gly) (interchain with G-Cter in SUMO2) linkage. 2 stretches are compositionally biased toward low complexity: residues Arg-64 to Gly-73 and Ala-81 to Gln-93. Positions His-94–Met-132 are enriched in polar residues. Lys-131 is covalently cross-linked (Glycyl lysine isopeptide (Lys-Gly) (interchain with G-Cter in SUMO2)). Positions Arg-145–Ala-241 constitute a POU-specific atypical domain. Ser-148 bears the Phosphoserine mark. Lys-161 participates in a covalent cross-link: Glycyl lysine isopeptide (Lys-Gly) (interchain with G-Cter in SUMO2). Ser-170 carries the phosphoserine modification. Residues Lys-174, Lys-217, and Lys-310 each participate in a glycyl lysine isopeptide (Lys-Gly) (interchain with G-Cter in SUMO2) cross-link. Positions Arg-267–Ala-341 form a DNA-binding region, homeobox. A disordered region spans residues Ile-352–Gln-384. The span at Asp-364–Asp-376 shows a compositional bias: acidic residues. Residue Lys-412 forms a Glycyl lysine isopeptide (Lys-Gly) (interchain with G-Cter in SUMO1); alternate linkage. A Glycyl lysine isopeptide (Lys-Gly) (interchain with G-Cter in SUMO2); alternate cross-link involves residue Lys-412.

In terms of assembly, associates with the telomerase holoenzyme complex. Interacts with DKC1, XRCC6 and COIL.

Its subcellular location is the nucleus. It localises to the cytoplasm. It is found in the chromosome. The protein localises to the telomere. The protein resides in the cajal body. Its subcellular location is the PML body. In terms of biological role, binds directly to 5'-TTAGGG-3' repeats in telomeric DNA. Associates with the telomerase complex at sites of active telomere processing and positively regulates telomere elongation. Important for TERT binding to chromatin, indicating a role in recruitment of the telomerase complex to telomeres. Also plays a role in the alternative lengthening of telomeres (ALT) pathway in telomerase-negative cells where it promotes formation and/or maintenance of ALT-associated promyelocytic leukemia bodies (APBs). Enhances formation of telomere C-circles in ALT cells, suggesting a possible role in telomere recombination. Might also be involved in the DNA damage response at telomeres. This Mus musculus (Mouse) protein is Homeobox-containing protein 1 (Hmbox1).